We begin with the raw amino-acid sequence, 130 residues long: Flagellar assembly factor FliW (130 aa).

This sequence belongs to the FliW family. In terms of assembly, interacts with translational regulator CsrA and flagellin(s).

The protein localises to the cytoplasm. Acts as an anti-CsrA protein, binds CsrA and prevents it from repressing translation of its target genes, one of which is flagellin. Binds to flagellin and participates in the assembly of the flagellum. In Borrelia turicatae (strain 91E135), this protein is Flagellar assembly factor FliW.